A 687-amino-acid polypeptide reads, in one-letter code: UvrABC system protein B (687 aa).

Residues 26–414 (EGLAAGEMYQ…GAVIEQVVRP (389 aa)) enclose the Helicase ATP-binding domain. 39–46 (GVTGSGKT) serves as a coordination point for ATP. Positions 92 to 115 (YYDYYQPEAYVPASDTYIGKDASV) match the Beta-hairpin motif. Residues 430–596 (QVDDLLSEIR…GIQKAVREII (167 aa)) form the Helicase C-terminal domain. Positions 630–665 (AKRLQQLERQMHKHAQNLEFEQAARLRDEIKRIKGW) constitute a UVR domain.

This sequence belongs to the UvrB family. In terms of assembly, forms a heterotetramer with UvrA during the search for lesions. Interacts with UvrC in an incision complex.

It is found in the cytoplasm. Its function is as follows. The UvrABC repair system catalyzes the recognition and processing of DNA lesions. A damage recognition complex composed of 2 UvrA and 2 UvrB subunits scans DNA for abnormalities. Upon binding of the UvrA(2)B(2) complex to a putative damaged site, the DNA wraps around one UvrB monomer. DNA wrap is dependent on ATP binding by UvrB and probably causes local melting of the DNA helix, facilitating insertion of UvrB beta-hairpin between the DNA strands. Then UvrB probes one DNA strand for the presence of a lesion. If a lesion is found the UvrA subunits dissociate and the UvrB-DNA preincision complex is formed. This complex is subsequently bound by UvrC and the second UvrB is released. If no lesion is found, the DNA wraps around the other UvrB subunit that will check the other stand for damage. The sequence is that of UvrABC system protein B from Nitrosococcus oceani (strain ATCC 19707 / BCRC 17464 / JCM 30415 / NCIMB 11848 / C-107).